A 423-amino-acid chain; its full sequence is MSTRNCQGMDSVIKPLDTIPEDKKVRVQRTQSTFDPFEKPTNQVKRVHSENNACINFKTSSTGKESPKVRRHSSPSSPTSPKFGKADSYEKLEKLGEGSYATVYKGKSKVNGKLVALKVIRLQEEEGTPFTAIREASLLKGLKHANIVLLHDIIHTKETLTLVFEYVHTDLCQYMDKHPGGLHPDNVKLFLFQLLRGLSYIHQRYILHRDLKPQNLLISDTGELKLADFGLARAKSVPSHTYSNEVVTLWYRPPDVLLGSTEYSTCLDMWGVGCIFVEMIQGVAAFPGMKDIQDQLERIFLVLGTPNEDTWPGVHSLPHFKPERFTLYSSKNLRQAWNKLSYVNHAEDLASKLLQCSPKNRLSAQAALSHEYFSDLPPRLWELTDMSSIFTVPNVRLQPEAGESMRAFGKNNSYGKSLSNSKH.

Phosphoserine occurs at positions 32, 49, and 88. Polar residues predominate over residues 49 to 64; it reads SENNACINFKTSSTGK. Residues 49 to 87 are disordered; it reads SENNACINFKTSSTGKESPKVRRHSSPSSPTSPKFGKAD. One can recognise a Protein kinase domain in the interval 89–373; sequence YEKLEKLGEG…AQAALSHEYF (285 aa). ATP contacts are provided by residues 95 to 103 and Lys-118; that span reads LGEGSYATV. Asp-210 acts as the Proton acceptor in catalysis. Residues 403-423 form a disordered region; that stretch reads ESMRAFGKNNSYGKSLSNSKH. Residues 410 to 423 are compositionally biased toward polar residues; sequence KNNSYGKSLSNSKH.

It belongs to the protein kinase superfamily. CMGC Ser/Thr protein kinase family. CDC2/CDKX subfamily. In terms of assembly, found in a complex with LRP6, CCNY and CAPRIN2 during G2/M stage; CAPRIN2 functions as a scaffold for the complex by binding to CCNY via its N terminus and to CDK14 via its C terminus. Interacts with CCNY; CCNY mediates its recruitment to the plasma membrane and promotes phosphorylation of LRP6. Interacts with CCDN3 and CDKN1A. Interacts with SEPT8. Interacts with 14-3-3 proteina YWHAB, YWHAE, YWHAH and YWHAQ.

It is found in the cell membrane. The protein localises to the cytoplasm. It localises to the nucleus. It carries out the reaction L-seryl-[protein] + ATP = O-phospho-L-seryl-[protein] + ADP + H(+). The enzyme catalyses L-threonyl-[protein] + ATP = O-phospho-L-threonyl-[protein] + ADP + H(+). Serine/threonine-protein kinase activity is promoted by associated cyclins CCDN3 and CCNY and repressed by CDKN1A. In terms of biological role, serine/threonine-protein kinase involved in the control of the eukaryotic cell cycle, whose activity is controlled by an associated cyclin. Acts as a cell-cycle regulator of Wnt signaling pathway during G2/M phase by mediating the phosphorylation of LRP6 at 'Ser-1490', leading to the activation of the Wnt signaling pathway. Acts as a regulator of cell cycle progression and cell proliferation via its interaction with CCDN3. Phosphorylates RB1 in vitro, however the relevance of such result remains to be confirmed in vivo. May also play a role in meiosis, neuron differentiation and may indirectly act as a negative regulator of insulin-responsive glucose transport. In Callithrix jacchus (White-tufted-ear marmoset), this protein is Cyclin-dependent kinase 14 (CDK14).